The sequence spans 461 residues: Polycomb group protein FIE1 (461 aa).

A compositionally biased stretch (basic residues) spans 1-11 (MPPSKARRKRS). A disordered region spans residues 1–56 (MPPSKARRKRSLRDITATVATGTVANSKPGSSSTNEGKQQDKKKEGPQEPDIPPLP). Residues 18 to 37 (TVATGTVANSKPGSSSTNEG) are compositionally biased toward polar residues. The span at 38 to 47 (KQQDKKKEGP) shows a compositional bias: basic and acidic residues. WD repeat units lie at residues 143-186 (DKDE…LDKS), 189-229 (GHGG…CILV), 235-275 (GHRH…IYVE), 301-338 (VHSD…RRPG), 351-391 (PKCS…PVLI), and 398-437 (ECKS…ASSS). The disordered stretch occupies residues 429-461 (EVDPAASSSKPDQAAAPAAGVGAGAGADADADA). The segment covering 432-448 (PAASSSKPDQAAAPAAG) has biased composition (low complexity).

Belongs to the WD repeat ESC family. As to expression, specifically expressed in kernel starting from 6 days after pollination.

Its subcellular location is the nucleus. Its function is as follows. Polycomb group (PcG) protein. PcG proteins act by forming multiprotein complexes, which are required to maintain the transcriptionally repressive state of homeotic genes throughout development. PcG proteins are not required to initiate repression, but to maintain it during later stages of development. They probably act via the methylation of histones, rendering chromatin heritably changed in its expressibility. This is Polycomb group protein FIE1 (FIE1) from Zea mays (Maize).